Here is a 214-residue protein sequence, read N- to C-terminus: Shikimate kinase (214 aa).

An ATP-binding site is contributed by 35-40 (GAGKST). S39 is a binding site for Mg(2+). Residues D57, R81, and G103 each contribute to the substrate site. R141 lines the ATP pocket. Residue R160 participates in substrate binding.

It belongs to the shikimate kinase family. Monomer. It depends on Mg(2+) as a cofactor.

The protein localises to the cytoplasm. The enzyme catalyses shikimate + ATP = 3-phosphoshikimate + ADP + H(+). Its pathway is metabolic intermediate biosynthesis; chorismate biosynthesis; chorismate from D-erythrose 4-phosphate and phosphoenolpyruvate: step 5/7. Catalyzes the specific phosphorylation of the 3-hydroxyl group of shikimic acid using ATP as a cosubstrate. This chain is Shikimate kinase, found in Nitrobacter winogradskyi (strain ATCC 25391 / DSM 10237 / CIP 104748 / NCIMB 11846 / Nb-255).